The primary structure comprises 858 residues: Ubiquitin carboxyl-terminal hydrolase 5 (858 aa).

At A2 the chain carries N-acetylalanine. Residues 73 to 98 form a disordered region; that stretch reads LRRTRRPKEEDTSAGTGDPPRKKPTR. K113 participates in a covalent cross-link: Glycyl lysine isopeptide (Lys-Gly) (interchain with G-Cter in SUMO). S149 and S156 each carry phosphoserine. The UBP-type; degenerate zinc finger occupies 175 to 283; it reads QVSKHAFNLK…EHLSHFGIDM (109 aa). C195 and C816 form a disulfide bridge. Positions 199 and 202 each coordinate Zn(2+). W209 contributes to the substrate binding site. C219 is a Zn(2+) binding site. Position 221–224 (221–224) interacts with substrate; the sequence is RRYF. H232 contributes to the Zn(2+) binding site. Positions 259, 261, and 264 each coordinate substrate. The residue at position 292 (T292) is a Phosphothreonine. The region spanning 326–856 is the USP domain; that stretch reads TGIRNLGNSC…LGYIYFYQRV (531 aa). The Nucleophile role is filled by C335. A Phosphothreonine modification is found at T623. 2 UBA domains span residues 654–695 and 722–762; these read MLDE…VMSH and PPPE…IFSH. Phosphoserine is present on residues S779, S783, and S785. The active-site Proton acceptor is H818.

This sequence belongs to the peptidase C19 family. Homodimer. Interacts with TRIML1. SUMOylated at Lys-113; SUMOylation affects the interaction with Cav3.2 channels. In terms of processing, ubiquitinated by SMURF1; leading to proteasomal degradation.

The protein localises to the cytoplasm. It localises to the stress granule. Its subcellular location is the nucleus. The enzyme catalyses Thiol-dependent hydrolysis of ester, thioester, amide, peptide and isopeptide bonds formed by the C-terminal Gly of ubiquitin (a 76-residue protein attached to proteins as an intracellular targeting signal).. In terms of biological role, deubiquitinating enzyme that participates in a wide range of cellular processes by specifically cleaving isopeptide bonds between ubiquitin and substrate proteins or ubiquitin itself. Affects thereby important cellular signaling pathways such as NF-kappa-B, Wnt/beta-catenin, and cytokine production by regulating ubiquitin-dependent protein degradation. Participates in the activation of the Wnt signaling pathway by promoting FOXM1 deubiquitination and stabilization that induces the recruitment of beta-catenin to Wnt target gene promoter. Regulates the assembly and disassembly of heat-induced stress granules by mediating the hydrolysis of unanchored ubiquitin chains. Promotes lipopolysaccharide-induced apoptosis and inflammatory response by stabilizing the TXNIP protein. Affects T-cell biology by stabilizing the inhibitory receptor on T-cells PDC1. Acts as a negative regulator of autophagy by regulating ULK1 at both protein and mRNA levels. Acts also as a negative regulator of type I interferon production by simultaneously removing both 'Lys-48'-linked unanchored and 'Lys-63'-linked anchored polyubiquitin chains on the transcription factor IRF3. Modulates the stability of DNA mismatch repair protein MLH1 and counteracts the effect of the ubiquitin ligase UBR4. Upon activation by insulin, it gets phosphorylated through mTORC1-mediated phosphorylation to enhance YTHDF1 stability by removing 'Lys-11'-linked polyubiquitination. May also deubiquitinate other substrates such as the calcium channel CACNA1H. The chain is Ubiquitin carboxyl-terminal hydrolase 5 (Usp5) from Mus musculus (Mouse).